A 114-amino-acid polypeptide reads, in one-letter code: Protein U68 (114 aa).

The protein belongs to the herpesviridae UL96 family.

This Homo sapiens (Human) protein is Protein U68 (U68).